The following is a 241-amino-acid chain: Fatty acid metabolism regulator protein (241 aa).

Residues 11–79 (QSPAALAEEY…HGKPTKVNNI (69 aa)) form the HTH gntR-type domain. Positions 39–58 (ERDLADKIGVTRTTLREVLQ) form a DNA-binding region, H-T-H motif.

As to quaternary structure, homodimer.

The protein resides in the cytoplasm. Functionally, multifunctional regulator of fatty acid metabolism. The sequence is that of Fatty acid metabolism regulator protein from Haemophilus influenzae (strain 86-028NP).